The following is a 121-amino-acid chain: Spermidine export protein MdtJ (121 aa).

The next 4 helical transmembrane spans lie at 1-21, 32-52, 55-75, and 82-102; these read MYIYWILLGLAIATEITGTLS, GGFILMLVMISLSYIFLSFAV, IALGVAYALWEGIGILFITLF, and ESLSLMKIAGLTTLVAGIVLI.

Belongs to the drug/metabolite transporter (DMT) superfamily. Small multidrug resistance (SMR) (TC 2.A.7.1) family. MdtJ subfamily. In terms of assembly, forms a complex with MdtI.

The protein resides in the cell inner membrane. Functionally, catalyzes the excretion of spermidine. This Escherichia coli O139:H28 (strain E24377A / ETEC) protein is Spermidine export protein MdtJ.